A 229-amino-acid polypeptide reads, in one-letter code: Orotidine 5'-phosphate decarboxylase (229 aa).

Substrate-binding positions include Asp10, Lys32, 59 to 68 (DLKFHDIPNT), Thr119, Arg180, Gln189, Gly209, and Arg210. Lys61 functions as the Proton donor in the catalytic mechanism.

This sequence belongs to the OMP decarboxylase family. Type 1 subfamily. As to quaternary structure, homodimer.

It catalyses the reaction orotidine 5'-phosphate + H(+) = UMP + CO2. It participates in pyrimidine metabolism; UMP biosynthesis via de novo pathway; UMP from orotate: step 2/2. Its function is as follows. Catalyzes the decarboxylation of orotidine 5'-monophosphate (OMP) to uridine 5'-monophosphate (UMP). This Legionella pneumophila (strain Corby) protein is Orotidine 5'-phosphate decarboxylase.